The primary structure comprises 38 residues: Cytochrome b6-f complex subunit 5 (38 aa).

Residues 5–25 (LLLGIVLGLIPVTLAGLFVAA) traverse the membrane as a helical segment.

The protein belongs to the PetG family. In terms of assembly, the 4 large subunits of the cytochrome b6-f complex are cytochrome b6, subunit IV (17 kDa polypeptide, PetD), cytochrome f and the Rieske protein, while the 4 small subunits are PetG, PetL, PetM and PetN. The complex functions as a dimer.

The protein localises to the cellular thylakoid membrane. Its function is as follows. Component of the cytochrome b6-f complex, which mediates electron transfer between photosystem II (PSII) and photosystem I (PSI), cyclic electron flow around PSI, and state transitions. PetG is required for either the stability or assembly of the cytochrome b6-f complex. In Picosynechococcus sp. (strain ATCC 27264 / PCC 7002 / PR-6) (Agmenellum quadruplicatum), this protein is Cytochrome b6-f complex subunit 5.